A 371-amino-acid polypeptide reads, in one-letter code: GDP-mannose 3,5-epimerase 2 (371 aa).

NAD(+) is bound by residues 29 to 55, D53, and D73; that span reads GAGGFIASHIARRLKSEGHYIIASDWK. Residues G98 and 138 to 140 each bind substrate; that span reads SAC. Positions 168 and 172 each coordinate NAD(+). Y168 serves as the catalytic Proton acceptor. Residues N197, 210–212, K219, 235–237, R300, and S350 each bind substrate; these read EKA and QTR.

Belongs to the NAD(P)-dependent epimerase/dehydratase family. The cofactor is NAD(+).

The enzyme catalyses GDP-alpha-D-mannose = GDP-beta-L-gulose. The catalysed reaction is GDP-beta-L-gulose = GDP-beta-L-galactose. It participates in cofactor biosynthesis; L-ascorbate biosynthesis via GDP-alpha-D-mannose pathway; L-ascorbate from GDP-alpha-D-mannose: step 1/5. Catalyzes a reversible epimerization of GDP-D-mannose that precedes the committed step in the biosynthesis of vitamin C (L-ascorbate), resulting in the hydrolysis of the highly energetic glycosyl-pyrophosphoryl linkage. Able to catalyze 2 distinct epimerization reactions and can release both GDP-L-galactose and GDP-L-gulose from GDP-mannose. The protein is GDP-mannose 3,5-epimerase 2 (GME-2) of Oryza sativa subsp. japonica (Rice).